The primary structure comprises 305 residues: UDP-3-O-acyl-N-acetylglucosamine deacetylase (305 aa).

Residues His-79, His-238, and Asp-242 each coordinate Zn(2+). Catalysis depends on His-265, which acts as the Proton donor.

The protein belongs to the LpxC family. Zn(2+) is required as a cofactor.

The enzyme catalyses a UDP-3-O-[(3R)-3-hydroxyacyl]-N-acetyl-alpha-D-glucosamine + H2O = a UDP-3-O-[(3R)-3-hydroxyacyl]-alpha-D-glucosamine + acetate. The protein operates within glycolipid biosynthesis; lipid IV(A) biosynthesis; lipid IV(A) from (3R)-3-hydroxytetradecanoyl-[acyl-carrier-protein] and UDP-N-acetyl-alpha-D-glucosamine: step 2/6. Functionally, catalyzes the hydrolysis of UDP-3-O-myristoyl-N-acetylglucosamine to form UDP-3-O-myristoylglucosamine and acetate, the committed step in lipid A biosynthesis. This chain is UDP-3-O-acyl-N-acetylglucosamine deacetylase, found in Cronobacter sakazakii (strain ATCC BAA-894) (Enterobacter sakazakii).